A 303-amino-acid chain; its full sequence is Signal recognition particle receptor FtsY (303 aa).

GTP is bound by residues 108–115 (GVNGAGKT), 190–194 (DTAGR), and 254–257 (TKLD).

Belongs to the GTP-binding SRP family. FtsY subfamily. As to quaternary structure, part of the signal recognition particle protein translocation system, which is composed of SRP and FtsY. SRP is a ribonucleoprotein composed of Ffh and a 4.5S RNA molecule.

It localises to the cell inner membrane. Its subcellular location is the cytoplasm. The catalysed reaction is GTP + H2O = GDP + phosphate + H(+). Its function is as follows. Involved in targeting and insertion of nascent membrane proteins into the cytoplasmic membrane. Acts as a receptor for the complex formed by the signal recognition particle (SRP) and the ribosome-nascent chain (RNC). Interaction with SRP-RNC leads to the transfer of the RNC complex to the Sec translocase for insertion into the membrane, the hydrolysis of GTP by both Ffh and FtsY, and the dissociation of the SRP-FtsY complex into the individual components. The polypeptide is Signal recognition particle receptor FtsY (Rickettsia bellii (strain RML369-C)).